The primary structure comprises 937 residues: ABC transporter A family member 4 (937 aa).

7 helical membrane-spanning segments follow: residues 34-54 (LIVI…LFDT), 340-360 (IASV…FPVI), 394-414 (FLAI…AIGL), 423-443 (SIQF…AFLV), 455-475 (VAAY…FQFM), 478-498 (GLSF…FSLY), and 528-548 (AMDE…IAAY). Residues 618–852 (DKLKKVYPGR…YGGSYVLTMT (235 aa)) enclose the ABC transporter domain. 653–660 (GPNGAGKT) lines the ATP pocket.

It belongs to the ABC transporter superfamily. ABCA family. CPR flippase (TC 3.A.1.211) subfamily.

It is found in the membrane. This is ABC transporter A family member 4 (ABCA4) from Arabidopsis thaliana (Mouse-ear cress).